We begin with the raw amino-acid sequence, 675 residues long: MEEISTDPVVPAVKPDPRTSSVGEGANRHENDDGGSGGSEIGAPDLDKDLLCPICMQIIKDAFLTACGHSFCYMCIITHLRNKSDCPCCSQHLTNNQLYPNFLLDKLLKKTSARHVSKTASPLDQFREALQRGCDVSIKEVDNLLTLLAERKRKMEQEEAERNMQILLDFLHCLRKQKVDELNEVQTDLQYIKEDINAVERHRIDLYRARDRYSVKLRMLGDDPSTRNAWPHEKNQIGFNSNSLSIRGGNFVGNYQNKKVEGKAQGSSHGLPKKDALSGSDSQSLNQSTVSMARKKRIHAQFNDLQECYLQKRRQLADQPNSKQENDKSVVRREGYSNGLADFQSVLTTFTRYSRLRVIAEIRHGDIFHSANIVSSIEFDRDDELFATAGVSRCIKVFDFSSVVNEPADMQCPIVEMSTRSKLSCLSWNKHEKNHIASSDYEGIVTVWDVTTRQSLMEYEEHEKRAWSVDFSRTEPSMLVSGSDDCKVKVWCTRQEASVINIDMKANICCVKYNPGSSNYIAVGSADHHIHYYDLRNISQPLHVFSGHKKAVSYVKFLSNNELASASTDSTLRLWDVKDNLPVRTFRGHTNEKNFVGLTVNSEYLACGSETNEVYVYHKEITRPVTSHRFGSPDMDDAEEEAGSYFISAVCWKSDSPTMLTANSQGTIKVLVLAA.

The segment at 1–40 is disordered; the sequence is MEEISTDPVVPAVKPDPRTSSVGEGANRHENDDGGSGGSE. Residues Cys-52, Cys-55, Cys-67, His-69, Cys-72, Cys-75, Cys-86, and Cys-89 each contribute to the Zn(2+) site. The segment at 52–90 adopts an RING-type zinc-finger fold; it reads CPICMQIIKDAFLTACGHSFCYMCIITHLRNKSDCPCCS. Residues 67–177 are CLS (cytoplasmic localization signal); it reads CGHSFCYMCI…LDFLHCLRKQ (111 aa). The SNLS (subnuclear localization signal) stretch occupies residues 120-177; the sequence is ASPLDQFREALQRGCDVSIKEVDNLLTLLAERKRKMEQEEAERNMQILLDFLHCLRKQ. Residues 134-201 adopt a coiled-coil conformation; sequence CDVSIKEVDN…IKEDINAVER (68 aa). The tract at residues 261 to 290 is disordered; that stretch reads EGKAQGSSHGLPKKDALSGSDSQSLNQSTV. Polar residues predominate over residues 279–290; sequence GSDSQSLNQSTV. The Bipartite nuclear localization signal motif lies at 294 to 317; sequence RKKRIHAQFNDLQECYLQKRRQLA. 7 WD repeats span residues 369-408, 418-458, 461-501, 503-543, 547-585, 588-627, and 642-675; these read HSAN…NEPA, STRS…SLME, EHEK…SVIN, DMKA…QPLH, GHKK…PVRT, GHTN…PVTS, and AGSY…VLAA. The binding of human TRIB1 COP1-binding-motif stretch occupies residues 593-595; that stretch reads KNF.

In terms of assembly, homodimer. Interacts with HY5, HYH, BBX24/STO, BBX25/STH, CIP8, COP10, SPA1, SPA2, SPA3, SPA4 and UVR8 and phosphorylated PHYA. Light induces dissociation of the SPA1/COP1 complex. Interacts with HRT/RPP8 and triggers it to the 26s proteasome. Binds to CRY2; this competitive interaction prevents triggering to proteasome of other binding proteins. Binds to SHW1 in the nucleus. Bonds to CIP7. Interacts with CSU2. Binds to CIP1. Interacts directly with DHU1. Associates to UNE10/PIF8. Binds directly to PCH1 and PCHL. In terms of processing, autoubiquitinated.

The protein resides in the nucleus. Its subcellular location is the cytoplasm. It catalyses the reaction S-ubiquitinyl-[E2 ubiquitin-conjugating enzyme]-L-cysteine + [acceptor protein]-L-lysine = [E2 ubiquitin-conjugating enzyme]-L-cysteine + N(6)-ubiquitinyl-[acceptor protein]-L-lysine.. It participates in protein modification; protein ubiquitination. In terms of biological role, E3 ubiquitin-protein ligase that acts as a repressor of photomorphogenesis and as an activator of etiolation in darkness. E3 ubiquitin ligases accept ubiquitin from an E2 ubiquitin-conjugating enzyme in the form of a thioester and then directly transfers the ubiquitin to targeted substrates. Represses photomorphogenesis in darkness by mediating ubiquitination and subsequent proteasomal degradation of light-induced transcription factors such as HY5, HYH and LAF1. Down-regulates MYB21, probably via ubiquitination process. Light stimuli abrogate the repression of photomorphogenesis, possibly due to its localization to the cytoplasm. Could play a role in switching between skotomorphogenetic and photomorphogenetic pathways. Mediates the ubiquitination-dependent degradation of HY5 in the darkness during seedling development (e.g. hypocotyl growth). Represses CIP7 in darkness. Triggers ubiquitination and subsequent protein degradation of UNE10/PIF8, PCH1 and PCHL in the dark. The polypeptide is E3 ubiquitin-protein ligase COP1 (Arabidopsis thaliana (Mouse-ear cress)).